A 474-amino-acid chain; its full sequence is Trehalose-6-phosphate synthase (474 aa).

Arg10 is a binding site for D-glucose 6-phosphate. 22–23 (GG) is a binding site for UDP-alpha-D-glucose. The D-glucose 6-phosphate site is built by Tyr77 and Asp131. 2 residues coordinate UDP-alpha-D-glucose: Arg263 and Lys268. Arg301 provides a ligand contact to D-glucose 6-phosphate. UDP-alpha-D-glucose contacts are provided by residues Phe340 and 366–370 (LVAKE).

The protein belongs to the glycosyltransferase 20 family. As to quaternary structure, homotetramer.

It carries out the reaction D-glucose 6-phosphate + UDP-alpha-D-glucose = alpha,alpha-trehalose 6-phosphate + UDP + H(+). The protein operates within glycan biosynthesis; trehalose biosynthesis. Probably involved in the osmoprotection via the biosynthesis of trehalose. Catalyzes the transfer of glucose from UDP-alpha-D-glucose (UDP-Glc) to D-glucose 6-phosphate (Glc-6-P) to form trehalose-6-phosphate. Acts with retention of the anomeric configuration of the UDP-sugar donor. This is Trehalose-6-phosphate synthase from Pseudomonas savastanoi (Pseudomonas syringae pv. savastanoi).